We begin with the raw amino-acid sequence, 420 residues long: ATP phosphoribosyltransferase regulatory subunit (420 aa).

Belongs to the class-II aminoacyl-tRNA synthetase family. HisZ subfamily. As to quaternary structure, heteromultimer composed of HisG and HisZ subunits.

The protein resides in the cytoplasm. Its pathway is amino-acid biosynthesis; L-histidine biosynthesis; L-histidine from 5-phospho-alpha-D-ribose 1-diphosphate: step 1/9. Its function is as follows. Required for the first step of histidine biosynthesis. May allow the feedback regulation of ATP phosphoribosyltransferase activity by histidine. This Bacillus cereus (strain G9842) protein is ATP phosphoribosyltransferase regulatory subunit.